The chain runs to 189 residues: Dual specificity phosphatase 21 (189 aa).

Positions 20–161 constitute a Tyrosine-protein phosphatase domain; sequence GLSQITASLF…LIHYEFKLFS (142 aa). Residues 43-128 are sufficient for mitochondrial localization; sequence SNNHITTIIN…YLMKYHNMTL (86 aa). Cys105 (phosphocysteine intermediate) is an active-site residue.

This sequence belongs to the protein-tyrosine phosphatase family. Non-receptor class dual specificity subfamily. As to quaternary structure, microtubule inner protein component of sperm flagellar doublet microtubules. In terms of tissue distribution, selectively expressed in testis.

It is found in the cytoplasm. Its subcellular location is the nucleus. It localises to the mitochondrion inner membrane. The protein resides in the cytoskeleton. The protein localises to the flagellum axoneme. The enzyme catalyses O-phospho-L-tyrosyl-[protein] + H2O = L-tyrosyl-[protein] + phosphate. It catalyses the reaction O-phospho-L-seryl-[protein] + H2O = L-seryl-[protein] + phosphate. It carries out the reaction O-phospho-L-threonyl-[protein] + H2O = L-threonyl-[protein] + phosphate. In terms of biological role, protein phosphatase component of the sperm flagellar doublet microtubules. May act as a regulator of sperm motility by mediating dephosphorylation of sperm doublet microtubule proteins. Can dephosphorylate single and diphosphorylated synthetic MAPK peptides, with preference for the phosphotyrosine and diphosphorylated forms over phosphothreonine. This chain is Dual specificity phosphatase 21, found in Mus musculus (Mouse).